Consider the following 270-residue polypeptide: Transcription factor PU.1 (270 aa).

A disordered region spans residues 124–162 (LSPAQPSSDEEEGERQSPPLEVSDGEADGLEPGPGLLHG). Phosphoserine occurs at positions 140 and 146. Over residues 153–162 (LEPGPGLLHG) the composition is skewed to low complexity. Residues 170-253 (IRLYQFLLDL…VKKKLTYQFS (84 aa)) constitute a DNA-binding region (ETS). DNA is bound by residues lysine 217, arginine 230, arginine 233, and lysine 243.

The protein belongs to the ETS family. Binds DNA as a monomer. Can form homomers. Directly interacts with CEBPD/NF-IL6-beta; this interaction does not affect DNA-binding properties of each partner. Interacts with NONO/p54(nrb). Interacts with RUNX1/AML1. Interacts with GFI1; the interaction represses SPI1 transcriptional activity, hence blocks SPI1-induced macrophage differentiation of myeloid progenitor cells. Interacts with CEBPE. Interacts with IRF4/Pip and IRF8. Interacts with JUN. Interacts with RB1. Interacts with TBP.

It is found in the nucleus. Its activity is regulated as follows. Transcriptional activity at macrophage-specific genes is inhibited by interaction with GFI1, which results in the inhibition of SPI1-induced macrophage differentiation of myeloid progenitor cells, but not that of the granulocyte lineage. In terms of biological role, pioneer transcription factor, which controls hematopoietic cell fate by decompacting stem cell heterochromatin and allowing other transcription factors to enter otherwise inaccessible genomic sites. Once in open chromatin, can directly control gene expression by binding genetic regulatory elements and can also more broadly influence transcription by recruiting transcription factors, such as interferon regulatory factors (IRFs), to otherwise inaccessible genomic regions. Transcriptionally activates genes important for myeloid and lymphoid lineages, such as CSF1R. Transcriptional activation from certain promoters, possibly containing low affinity binding sites, is achieved cooperatively with other transcription factors. FCER1A transactivation is achieved in cooperation with GATA1. May be particularly important for the pro- to pre-B cell transition. Binds (via the ETS domain) onto the purine-rich DNA core sequence 5'-GAGGAA-3', also known as the PU-box. In vitro can bind RNA and interfere with pre-mRNA splicing. This chain is Transcription factor PU.1 (SPI1), found in Sus scrofa (Pig).